A 436-amino-acid chain; its full sequence is tRNA-2-methylthio-N(6)-dimethylallyladenosine synthase (436 aa).

Residues 1–115 enclose the MTTase N-terminal domain; the sequence is MRVFFKTYGC…IAEVLQKAAR (115 aa). Residues C10, C46, C80, C151, C155, and C158 each contribute to the [4Fe-4S] cluster site. The Radical SAM core domain maps to 137–368; that stretch reads RFSKHHAWIT…LELQKQINRE (232 aa). One can recognise a TRAM domain in the interval 371–432; that stretch reads MQYLGKVVEI…AGPLYGKLQK (62 aa).

The protein belongs to the methylthiotransferase family. MiaB subfamily. In terms of assembly, monomer. [4Fe-4S] cluster is required as a cofactor.

It is found in the cytoplasm. The enzyme catalyses N(6)-dimethylallyladenosine(37) in tRNA + (sulfur carrier)-SH + AH2 + 2 S-adenosyl-L-methionine = 2-methylsulfanyl-N(6)-dimethylallyladenosine(37) in tRNA + (sulfur carrier)-H + 5'-deoxyadenosine + L-methionine + A + S-adenosyl-L-homocysteine + 2 H(+). In terms of biological role, catalyzes the methylthiolation of N6-(dimethylallyl)adenosine (i(6)A), leading to the formation of 2-methylthio-N6-(dimethylallyl)adenosine (ms(2)i(6)A) at position 37 in tRNAs that read codons beginning with uridine. The polypeptide is tRNA-2-methylthio-N(6)-dimethylallyladenosine synthase (Pseudothermotoga lettingae (strain ATCC BAA-301 / DSM 14385 / NBRC 107922 / TMO) (Thermotoga lettingae)).